The sequence spans 306 residues: Methionyl-tRNA formyltransferase (306 aa).

105–108 provides a ligand contact to (6S)-5,6,7,8-tetrahydrofolate; that stretch reads SLLP.

The protein belongs to the Fmt family.

It carries out the reaction L-methionyl-tRNA(fMet) + (6R)-10-formyltetrahydrofolate = N-formyl-L-methionyl-tRNA(fMet) + (6S)-5,6,7,8-tetrahydrofolate + H(+). Functionally, attaches a formyl group to the free amino group of methionyl-tRNA(fMet). The formyl group appears to play a dual role in the initiator identity of N-formylmethionyl-tRNA by promoting its recognition by IF2 and preventing the misappropriation of this tRNA by the elongation apparatus. This Rubrobacter xylanophilus (strain DSM 9941 / JCM 11954 / NBRC 16129 / PRD-1) protein is Methionyl-tRNA formyltransferase.